The following is a 135-amino-acid chain: ATP synthase epsilon chain (135 aa).

It belongs to the ATPase epsilon chain family. F-type ATPases have 2 components, CF(1) - the catalytic core - and CF(0) - the membrane proton channel. CF(1) has five subunits: alpha(3), beta(3), gamma(1), delta(1), epsilon(1). CF(0) has three main subunits: a, b and c.

It localises to the cell inner membrane. In terms of biological role, produces ATP from ADP in the presence of a proton gradient across the membrane. The polypeptide is ATP synthase epsilon chain (Bradyrhizobium sp. (strain ORS 278)).